We begin with the raw amino-acid sequence, 118 residues long: Large ribosomal subunit protein bL20 (118 aa).

The protein belongs to the bacterial ribosomal protein bL20 family.

Binds directly to 23S ribosomal RNA and is necessary for the in vitro assembly process of the 50S ribosomal subunit. It is not involved in the protein synthesizing functions of that subunit. In Psychrobacter sp. (strain PRwf-1), this protein is Large ribosomal subunit protein bL20.